Reading from the N-terminus, the 170-residue chain is NADH-ubiquinone oxidoreductase chain 6 (170 aa).

5 helical membrane passes run 1–21 (MIYM…AVAS), 26–46 (FYAA…IVSF), 49–69 (SFLS…VFAY), 86–106 (VVFY…FLGG), and 138–158 (WVII…GIWV).

Belongs to the complex I subunit 6 family. As to quaternary structure, core subunit of respiratory chain NADH dehydrogenase (Complex I) which is composed of 45 different subunits.

It localises to the mitochondrion inner membrane. It catalyses the reaction a ubiquinone + NADH + 5 H(+)(in) = a ubiquinol + NAD(+) + 4 H(+)(out). Its function is as follows. Core subunit of the mitochondrial membrane respiratory chain NADH dehydrogenase (Complex I) which catalyzes electron transfer from NADH through the respiratory chain, using ubiquinone as an electron acceptor. Essential for the catalytic activity and assembly of complex I. In Xenopus laevis (African clawed frog), this protein is NADH-ubiquinone oxidoreductase chain 6 (mt-nd6).